The primary structure comprises 858 residues: DNA mismatch repair protein MutS (858 aa).

An ATP-binding site is contributed by Gly-637 to Ser-644.

This sequence belongs to the DNA mismatch repair MutS family.

This protein is involved in the repair of mismatches in DNA. It is possible that it carries out the mismatch recognition step. This protein has a weak ATPase activity. This Protochlamydia amoebophila (strain UWE25) protein is DNA mismatch repair protein MutS.